The chain runs to 312 residues: ADP-L-glycero-D-manno-heptose-6-epimerase (312 aa).

NADP(+) is bound by residues 10-11, 31-32, lysine 38, lysine 53, 75-79, and asparagine 92; these read FI, DN, and EGACS. The Proton acceptor role is filled by tyrosine 140. Lysine 144 lines the NADP(+) pocket. Asparagine 169 provides a ligand contact to substrate. Residues valine 170 and lysine 178 each contribute to the NADP(+) site. The Proton acceptor role is filled by lysine 178. Substrate contacts are provided by residues serine 180, histidine 187, 201 to 204, arginine 209, and tyrosine 274; that span reads FAGS.

It belongs to the NAD(P)-dependent epimerase/dehydratase family. HldD subfamily. Homopentamer. NADP(+) serves as cofactor.

The enzyme catalyses ADP-D-glycero-beta-D-manno-heptose = ADP-L-glycero-beta-D-manno-heptose. Its pathway is nucleotide-sugar biosynthesis; ADP-L-glycero-beta-D-manno-heptose biosynthesis; ADP-L-glycero-beta-D-manno-heptose from D-glycero-beta-D-manno-heptose 7-phosphate: step 4/4. It functions in the pathway bacterial outer membrane biogenesis; LPS core biosynthesis. Catalyzes the interconversion between ADP-D-glycero-beta-D-manno-heptose and ADP-L-glycero-beta-D-manno-heptose via an epimerization at carbon 6 of the heptose. The chain is ADP-L-glycero-D-manno-heptose-6-epimerase from Photorhabdus laumondii subsp. laumondii (strain DSM 15139 / CIP 105565 / TT01) (Photorhabdus luminescens subsp. laumondii).